Here is a 148-residue protein sequence, read N- to C-terminus: Putative nickel-responsive regulator (148 aa).

Ni(2+)-binding residues include histidine 88, histidine 99, histidine 101, and cysteine 107.

This sequence belongs to the transcriptional regulatory CopG/NikR family. Ni(2+) is required as a cofactor.

Its function is as follows. Transcriptional regulator. The polypeptide is Putative nickel-responsive regulator (Helicobacter pylori (strain Shi470)).